Reading from the N-terminus, the 315-residue chain is Heme oxygenase 2 (315 aa).

Positions 1 to 15 (MSSEVETSEGVDESE) are enriched in polar residues. Residues 1-29 (MSSEVETSEGVDESENNSTAPEKENHTKM) are disordered. Ser2 carries the post-translational modification N-acetylserine. Residue Ser2 is modified to Phosphoserine. Topologically, residues 2–294 (SSEVETSEGV…TAMAVLRKPS (293 aa)) are cytoplasmic. Residues His44, Tyr153, Lys198, and Arg202 each coordinate heme b. 2 HRM repeats span residues 263 to 268 (KCPFYA) and 280 to 285 (NCPFRT). 2 positions are modified to S-nitrosocysteine: Cys264 and Cys281. The helical; Anchor for type IV membrane protein transmembrane segment at 295-315 (LQLILAASVALVAGLLAWYYM) threads the bilayer.

This sequence belongs to the heme oxygenase family. A soluble form arises by proteolytic removal of the membrane anchor. Post-translationally, S-nitrosylated by BLVRB. As to expression, widely distributed in body with a high concentration in the brain.

The protein resides in the microsome membrane. It localises to the endoplasmic reticulum membrane. The enzyme catalyses heme b + 3 reduced [NADPH--hemoprotein reductase] + 3 O2 = biliverdin IXalpha + CO + Fe(2+) + 3 oxidized [NADPH--hemoprotein reductase] + 3 H2O + H(+). Its activity is regulated as follows. Inhibited by metalloporphyrins such as Sn- and Zn-protoporphyrins. Its function is as follows. Catalyzes the oxidative cleavage of heme at the alpha-methene bridge carbon, released as carbon monoxide (CO), to generate biliverdin IXalpha, while releasing the central heme iron chelate as ferrous iron. The protein is Heme oxygenase 2 (Hmox2) of Rattus norvegicus (Rat).